We begin with the raw amino-acid sequence, 76 residues long: DNA-directed RNA polymerase subunit omega (76 aa).

Belongs to the RNA polymerase subunit omega family. As to quaternary structure, the RNAP catalytic core consists of 2 alpha, 1 beta, 1 beta' and 1 omega subunit. When a sigma factor is associated with the core the holoenzyme is formed, which can initiate transcription.

The catalysed reaction is RNA(n) + a ribonucleoside 5'-triphosphate = RNA(n+1) + diphosphate. Its function is as follows. Promotes RNA polymerase assembly. Latches the N- and C-terminal regions of the beta' subunit thereby facilitating its interaction with the beta and alpha subunits. In Aquifex aeolicus (strain VF5), this protein is DNA-directed RNA polymerase subunit omega (rpoZ).